The sequence spans 214 residues: Redox-sensing transcriptional repressor Rex (214 aa).

A DNA-binding region (H-T-H motif) is located at residues 16-55; the sequence is IYFRYLNVLKDANKQRVSSTELSEAVQVDSATIRRDFSYF. Residue 90–95 coordinates NAD(+); it reads GVGSLG.

It belongs to the transcriptional regulatory Rex family. Homodimer.

It localises to the cytoplasm. Functionally, modulates transcription in response to changes in cellular NADH/NAD(+) redox state. This Limosilactobacillus reuteri (strain DSM 20016) (Lactobacillus reuteri) protein is Redox-sensing transcriptional repressor Rex.